Reading from the N-terminus, the 173-residue chain is MASRKTKKKEGGGLRAQRASSNVFSNFEQTQIQEFKEAFTLMDQNRDGFIDKEDLKDTYASLGKTNIKDDELDAMLKEASGPINFTMFLNMFGAKLTGTDAEETILNAFKMLDPEGKGSINKDYIKRLLMSQADKMTAEEVDQMFQFATIDAAGNLDYKALSYVLTHGEEKEE.

The disordered stretch occupies residues 1-22 (MASRKTKKKEGGGLRAQRASSN). 3 consecutive EF-hand domains span residues 30 to 65 (TQIQ…LGKT), 100 to 135 (DAEE…QADK), and 136 to 171 (MTAE…GEEK). Positions 43, 45, 47, and 54 each coordinate Ca(2+).

In terms of assembly, myosin is a hexamer of 2 heavy chains and 4 light chains. Jaw-closing muscles.

The sequence is that of Myosin light chain 5 (MYL5) from Felis catus (Cat).